The following is a 103-amino-acid chain: Small ribosomal subunit protein uS10 (103 aa).

Belongs to the universal ribosomal protein uS10 family. In terms of assembly, part of the 30S ribosomal subunit.

In terms of biological role, involved in the binding of tRNA to the ribosomes. This Sulfurovum sp. (strain NBC37-1) protein is Small ribosomal subunit protein uS10.